A 338-amino-acid chain; its full sequence is Lipoate-protein ligase A (338 aa).

Residues 29–216 (PATQRVLFLW…AFFAHYGERV (188 aa)) enclose the BPL/LPL catalytic domain. Residues R71, 76–79 (GAVF), and K134 contribute to the ATP site. K134 lines the (R)-lipoate pocket.

This sequence belongs to the LplA family. Monomer.

The protein resides in the cytoplasm. It catalyses the reaction L-lysyl-[lipoyl-carrier protein] + (R)-lipoate + ATP = N(6)-[(R)-lipoyl]-L-lysyl-[lipoyl-carrier protein] + AMP + diphosphate + H(+). Its pathway is protein modification; protein lipoylation via exogenous pathway; protein N(6)-(lipoyl)lysine from lipoate: step 1/2. It functions in the pathway protein modification; protein lipoylation via exogenous pathway; protein N(6)-(lipoyl)lysine from lipoate: step 2/2. In terms of biological role, catalyzes both the ATP-dependent activation of exogenously supplied lipoate to lipoyl-AMP and the transfer of the activated lipoyl onto the lipoyl domains of lipoate-dependent enzymes. The sequence is that of Lipoate-protein ligase A from Escherichia coli O157:H7.